A 726-amino-acid chain; its full sequence is MEGAAVAEGLWGLADHHQKLGEIGKTIKCLEAICQSQISFLPLVEVKSRLRLAALLLRYSHNVNHAKSHLERSLLLLKSIPSSYDLKFQNYSLLSHCYHLLASFPPQRNLLVKALELASSVPQDISAYLWSCNFNSQLANTFIIQADFPSSLSALESGFLSASHICFPELQMFFTASMLHVHIMQWTDDYSVEKAVQRCDEIWQTISSDKTDRCPGLFFYNEMLHVFYRLRLCDYKNAQHHVDRLDQAMNAHSHKMQEIQQLLDELSSLNLSLSRYDLPSRERSALSARQSQLQDRVNALSPSSSTVNSLEPAYFGNIDRGWTEKLLLSPSPIDGEWLPKSAIDALVHLMVVISGRPKGLFKECSKRIESGLQIIQDELIKLGITDEVREADLRHTAIWMSRVFLMLQMQFLENRVALELTRSDYVEAEEALVDMKNWFTRFPTILQASECMIEMLRGQYSHSVGCYSEAAFHCIEATKLTESISMQASCQAFAAVSYLTIGDAESSSKALDLIGPLNGMTNSLSGVREEASILFAYGLLLMKQRDLQEARNRLAKGLQIAHNHMGNLQLVAQYLTLLGNLALSLHDTVQAREILRSSLTLAKKLYDIPTQLWVLSIFTALYQQLGEKGNEMENEEFRKKKWDELQSRLAEARGSIHHIELVAKARIELYQIDNNPQEQSLVASAQSMQGNLDIPESVGIEGPSPAPSSSRLVGLDTGKRWGKRRM.

TPR repeat units lie at residues Ala7–Phe40, Phe88–Val121, Cys132–Ile165, Arg229–Leu262, Pro443–Ala477, Ala531–His564, and Ala572–Leu605. The disordered stretch occupies residues Ser697–Met726.

This sequence belongs to the SCC4/mau-2 family. As to quaternary structure, interacts with SCC2 to form the cohesin loading complex. As to expression, expressed ubiquitously.

The protein localises to the nucleus. Its subcellular location is the cytoplasm. Essential protein required for cell fate determination during embryogenesis. Involved in sister chromatid cohesion. Forms a complex with SCC2, which is required for the association of the cohesin complex with chromosomes. The sequence is that of Sister chromatid cohesion protein SCC4 from Arabidopsis thaliana (Mouse-ear cress).